Here is a 141-residue protein sequence, read N- to C-terminus: Putative pre-16S rRNA nuclease (141 aa).

Belongs to the YqgF nuclease family.

The protein resides in the cytoplasm. Its function is as follows. Could be a nuclease involved in processing of the 5'-end of pre-16S rRNA. The chain is Putative pre-16S rRNA nuclease from Natranaerobius thermophilus (strain ATCC BAA-1301 / DSM 18059 / JW/NM-WN-LF).